The chain runs to 145 residues: D-aminoacyl-tRNA deacylase (145 aa).

Residues 133–134 carry the Gly-cisPro motif, important for rejection of L-amino acids motif; sequence GP.

It belongs to the DTD family. In terms of assembly, homodimer.

It is found in the cytoplasm. It carries out the reaction glycyl-tRNA(Ala) + H2O = tRNA(Ala) + glycine + H(+). The catalysed reaction is a D-aminoacyl-tRNA + H2O = a tRNA + a D-alpha-amino acid + H(+). Its function is as follows. An aminoacyl-tRNA editing enzyme that deacylates mischarged D-aminoacyl-tRNAs. Also deacylates mischarged glycyl-tRNA(Ala), protecting cells against glycine mischarging by AlaRS. Acts via tRNA-based rather than protein-based catalysis; rejects L-amino acids rather than detecting D-amino acids in the active site. By recycling D-aminoacyl-tRNA to D-amino acids and free tRNA molecules, this enzyme counteracts the toxicity associated with the formation of D-aminoacyl-tRNA entities in vivo and helps enforce protein L-homochirality. The chain is D-aminoacyl-tRNA deacylase from Cutibacterium acnes (strain DSM 16379 / KPA171202) (Propionibacterium acnes).